A 398-amino-acid chain; its full sequence is MATRLFTSESVTEGHPDKIADQVSDSILDAMLKDDPKSRVAVETMITTGQVHVAGEVTTKTYVDIASVVRERILEIGYDSSKKGFDGASCGVSVSIGSQSPDIAQGVDTAHEARVEGSTEDDLDRQGAGDQGLMFGFACDETPELMPLPIALAHRLARRLSAVRKDGQVGYLRPDGKTQVTIEYEDGKPVRLDTVVVSSQHAADIDLDTLLAPDVAEYVVEPELALLEISTEGRRLLVNPTGRFEIGGPMGDAGLTGRKIIVDTYGGYARHGGGAFSGKDPSKVDRSAAYAMRWVAKNVVAAGLASRCEVQVAYAIGKAHPVGLFVETFGTGKVPDAQIQDAVTQVFDLRPAAIVRDLDLLRPIYAQTAAYGHFGRPELDFTWEATSRADALTAAVKG.

Position 15 (His15) interacts with ATP. Asp17 is a Mg(2+) binding site. Glu43 contributes to the K(+) binding site. Residues Glu56 and Gln99 each contribute to the L-methionine site. The flexible loop stretch occupies residues 99–109 (QSPDIAQGVDT). ATP contacts are provided by residues 175–177 (DGK), 243–244 (RF), Asp252, 258–259 (RK), Ala275, and Lys279. Asp252 contributes to the L-methionine binding site. Lys283 contacts L-methionine.

It belongs to the AdoMet synthase family. In terms of assembly, homotetramer; dimer of dimers. Requires Mg(2+) as cofactor. The cofactor is K(+).

The protein localises to the cytoplasm. It catalyses the reaction L-methionine + ATP + H2O = S-adenosyl-L-methionine + phosphate + diphosphate. It functions in the pathway amino-acid biosynthesis; S-adenosyl-L-methionine biosynthesis; S-adenosyl-L-methionine from L-methionine: step 1/1. Catalyzes the formation of S-adenosylmethionine (AdoMet) from methionine and ATP. The overall synthetic reaction is composed of two sequential steps, AdoMet formation and the subsequent tripolyphosphate hydrolysis which occurs prior to release of AdoMet from the enzyme. The polypeptide is S-adenosylmethionine synthase (Parafrankia sp. (strain EAN1pec)).